Here is a 325-residue protein sequence, read N- to C-terminus: Inner membrane protein YrbG (325 aa).

Over 1–5 the chain is Periplasmic; sequence MLLAT. The helical transmembrane segment at 6-26 threads the bilayer; the sequence is ALLIVGLLLVVYSADRLVFAA. Residues 27–37 lie on the Cytoplasmic side of the membrane; sequence SILCRTFGIPP. Residues 38–58 form a helical membrane-spanning segment; sequence LIIGMTVVSIGTSLPEVIVSL. At 59–67 the chain is on the periplasmic side; the sequence is AASLHEQRD. Residues 68–88 form a helical membrane-spanning segment; the sequence is LAVGTALGSNIINILLILGLA. At 89–104 the chain is on the cytoplasmic side; the sequence is ALVRPFTVHSDVLRRE. The chain crosses the membrane as a helical span at residues 105 to 125; sequence LPLMLLVSVVAGSVLYDGQLS. A topological domain (periplasmic) is located at residue Arg-126. A helical transmembrane segment spans residues 127–147; it reads SDGIFLLFLAVLWLLFIVKLA. Over 148-169 the chain is Cytoplasmic; it reads RQAERQGTDSLTREQLAELPRD. Residues 170–190 form a helical membrane-spanning segment; sequence GGLPVAFLWLGIALIIMPVAT. The Periplasmic segment spans residues 191–198; it reads RMVVDNAT. The chain crosses the membrane as a helical span at residues 199–219; sequence VLANYFAISELTMGLTAIAIG. The Cytoplasmic portion of the chain corresponds to 220–243; the sequence is TSLPELATAIAGVRKGENDIAVGN. Residues 244–264 form a helical membrane-spanning segment; the sequence is IIGANIFNIVIVLGLPALITP. Residues 265–269 are Periplasmic-facing; the sequence is GEIDP. A helical membrane pass occupies residues 270–290; sequence LAYSRDYSVMLLVSIIFALLC. The Cytoplasmic segment spans residues 291–302; the sequence is WRRSPQPGRGVG. Residues 303–323 form a helical membrane-spanning segment; the sequence is VLLTGGFIVWLAMLYWLSPIL. The Periplasmic segment spans residues 324–325; that stretch reads VE.

Belongs to the Ca(2+):cation antiporter (CaCA) (TC 2.A.19) family.

Its subcellular location is the cell inner membrane. The sequence is that of Inner membrane protein YrbG (yrbG) from Escherichia coli (strain K12).